Consider the following 236-residue polypeptide: Eukaryotic translation initiation factor 3 subunit J (236 aa).

A disordered region spans residues 1–88; the sequence is MADDWESAAD…EAEAQRVASL (88 aa). Residues 28-46 show a composition bias toward acidic residues; that stretch reads GEDEDEDIKDSWEDEEEKK. Basic and acidic residues-rich tracts occupy residues 47 to 58 and 68 to 77; these read DEEKPTKTEAPA and AKLEQQARLE.

This sequence belongs to the eIF-3 subunit J family. In terms of assembly, component of the eukaryotic translation initiation factor 3 (eIF-3) complex. The eIF-3 complex interacts with pix.

It is found in the cytoplasm. In terms of biological role, component of the eukaryotic translation initiation factor 3 (eIF-3) complex, which is involved in protein synthesis of a specialized repertoire of mRNAs and, together with other initiation factors, stimulates binding of mRNA and methionyl-tRNAi to the 40S ribosome. The eIF-3 complex specifically targets and initiates translation of a subset of mRNAs involved in cell proliferation. The polypeptide is Eukaryotic translation initiation factor 3 subunit J (Drosophila erecta (Fruit fly)).